Here is a 257-residue protein sequence, read N- to C-terminus: 4-hydroxy-tetrahydrodipicolinate reductase (257 aa).

Residues 8–13 (GSTGRV), 90–92 (ATT), and 114–117 (ATNM) contribute to the NAD(+) site. Histidine 146 functions as the Proton donor/acceptor in the catalytic mechanism. (S)-2,3,4,5-tetrahydrodipicolinate is bound at residue histidine 147. Lysine 150 acts as the Proton donor in catalysis. 156 to 157 (GT) provides a ligand contact to (S)-2,3,4,5-tetrahydrodipicolinate.

Belongs to the DapB family.

The protein resides in the cytoplasm. It carries out the reaction (S)-2,3,4,5-tetrahydrodipicolinate + NAD(+) + H2O = (2S,4S)-4-hydroxy-2,3,4,5-tetrahydrodipicolinate + NADH + H(+). The catalysed reaction is (S)-2,3,4,5-tetrahydrodipicolinate + NADP(+) + H2O = (2S,4S)-4-hydroxy-2,3,4,5-tetrahydrodipicolinate + NADPH + H(+). Its pathway is amino-acid biosynthesis; L-lysine biosynthesis via DAP pathway; (S)-tetrahydrodipicolinate from L-aspartate: step 4/4. Catalyzes the conversion of 4-hydroxy-tetrahydrodipicolinate (HTPA) to tetrahydrodipicolinate. The protein is 4-hydroxy-tetrahydrodipicolinate reductase of Aliarcobacter butzleri (strain RM4018) (Arcobacter butzleri).